We begin with the raw amino-acid sequence, 281 residues long: UPF0294 protein VP2298 (281 aa).

The protein belongs to the UPF0294 family.

Its subcellular location is the cytoplasm. The sequence is that of UPF0294 protein VP2298 from Vibrio parahaemolyticus serotype O3:K6 (strain RIMD 2210633).